A 284-amino-acid polypeptide reads, in one-letter code: Ribose-5-phosphate isomerase (284 aa).

The protein belongs to the ribose 5-phosphate isomerase family.

Its subcellular location is the cytoplasm. It catalyses the reaction aldehydo-D-ribose 5-phosphate = D-ribulose 5-phosphate. Its pathway is carbohydrate degradation; pentose phosphate pathway; D-ribose 5-phosphate from D-ribulose 5-phosphate (non-oxidative stage): step 1/1. The chain is Ribose-5-phosphate isomerase (RKI1) from Lodderomyces elongisporus (strain ATCC 11503 / CBS 2605 / JCM 1781 / NBRC 1676 / NRRL YB-4239) (Yeast).